The following is a 125-amino-acid chain: RutC family protein STK_08110 (125 aa).

Belongs to the RutC family.

The protein is RutC family protein STK_08110 of Sulfurisphaera tokodaii (strain DSM 16993 / JCM 10545 / NBRC 100140 / 7) (Sulfolobus tokodaii).